A 385-amino-acid chain; its full sequence is uncharacterized protein (385 aa).

Residue K194 is modified to N6-(pyridoxal phosphate)lysine.

The protein belongs to the class-V pyridoxal-phosphate-dependent aminotransferase family. Requires pyridoxal 5'-phosphate as cofactor.

This is an uncharacterized protein from Methanocaldococcus jannaschii (strain ATCC 43067 / DSM 2661 / JAL-1 / JCM 10045 / NBRC 100440) (Methanococcus jannaschii).